The primary structure comprises 378 residues: Cytochrome b (378 aa).

The next 4 membrane-spanning stretches (helical) occupy residues 34-54, 78-99, 114-134, and 179-199; these read FGSL…FLAM, WLLR…YLHV, WLVG…GYVL, and FFTF…IHIL. 2 residues coordinate heme b: H84 and H98. Positions 183 and 197 each coordinate heme b. H202 is a binding site for a ubiquinone. 4 consecutive transmembrane segments (helical) span residues 227–247, 289–309, 321–341, and 348–368; these read FKDI…VLIN, LGGV…PFYH, INQI…WIGA, and YVLV…FNPL.

This sequence belongs to the cytochrome b family. The main subunits of complex b-c1 are: cytochrome b, cytochrome c1 and the Rieske protein. Heme b serves as cofactor.

The protein localises to the mitochondrion inner membrane. Functionally, component of the ubiquinol-cytochrome c reductase complex (complex III or cytochrome b-c1 complex) that is part of the mitochondrial respiratory chain. The b-c1 complex mediates electron transfer from ubiquinol to cytochrome c. Contributes to the generation of a proton gradient across the mitochondrial membrane that is then used for ATP synthesis. The chain is Cytochrome b (MT-CYB) from Cochliomyia hominivorax (Primary screw-worm).